Consider the following 196-residue polypeptide: [1-hydroxy-2-(trimethylamino)ethyl]phosphonate dioxygenase (glycine-betaine-forming) (196 aa).

Residue Tyr30 participates in [(1R)-1-hydroxy-2-(trimethylamino)ethyl]phosphonate binding. Fe cation contacts are provided by Tyr30, His40, His64, and Asp65. An HD domain is found at 37–156; it reads MAEHMLQGAT…VAEFEKNPNL (120 aa). [(1R)-1-hydroxy-2-(trimethylamino)ethyl]phosphonate is bound by residues His68, His86, His109, Lys113, Ser131, Ser134, and Arg163. Residues His86 and His109 each coordinate Fe cation. A Fe cation-binding site is contributed by Asp166.

Fe cation is required as a cofactor.

The enzyme catalyses [(1R)-1-hydroxy-2-(trimethylamino)ethyl]phosphonate + O2 = glycine betaine + phosphate + 2 H(+). In terms of biological role, involved in the degradation of the naturally occurring organophosphonate 2-(trimethylammonio)ethylphosphonate (TMAEP). Catalyzes the O(2)-dependent cleavage of (R)-1-hydroxy-2-(trimethylammonio)ethylphosphonate (OH-TMAEP) to yield glycine betaine and phosphate. Is highly specific for its N-trimethylated substrate. This chain is [1-hydroxy-2-(trimethylamino)ethyl]phosphonate dioxygenase (glycine-betaine-forming), found in Leisingera caerulea (Phaeobacter caeruleus).